The chain runs to 1012 residues: Formate dehydrogenase 2 subunit alpha (cytochrome c-553) (1012 aa).

The segment at residues 1 to 33 (MKTTRRSFLKLVGVSVVGLSLGQLGFDLEDAQA) is a signal peptide (tat-type signal). The 4Fe-4S Mo/W bis-MGD-type domain occupies 43–99 (AKEVGTVCPFCSVCCQVIAYVRNGKLVSTEGDPDFPVNEGALCAKGAALFSMYTNPH). [4Fe-4S] cluster-binding residues include C50, C53, C57, and C85. U189 contributes to the W-bis(molybdopterin guanine dinucleotide) binding site. A non-standard amino acid (selenocysteine) is located at residue U189. Positions 389, 391, 394, 424, and 426 each coordinate Ca(2+).

Belongs to the prokaryotic molybdopterin-containing oxidoreductase family. Heterotrimer of cytochrome c3 FDH2C and formate dehydrogenase FDH2 alpha and beta subunits that forms the FdhABC(3) complex. [4Fe-4S] cluster is required as a cofactor. It depends on W-bis(molybdopterin guanine dinucleotide) as a cofactor. Predicted to be exported by the Tat system. The position of the signal peptide cleavage has not been experimentally proven.

Its subcellular location is the periplasm. The catalysed reaction is 2 Fe(III)-[cytochrome c553] + formate = 2 Fe(II)-[cytochrome c553] + CO2 + H(+). Alpha chain of the formate dehydrogenase (FDH) that catalyzes the reversible two-electron oxidation of formate to carbon dioxide. The alpha subunit of formate dehydrogenase forms the active site. The chain is Formate dehydrogenase 2 subunit alpha (cytochrome c-553) from Nitratidesulfovibrio vulgaris (strain ATCC 29579 / DSM 644 / CCUG 34227 / NCIMB 8303 / VKM B-1760 / Hildenborough) (Desulfovibrio vulgaris).